The chain runs to 216 residues: Fucoxanthin-chlorophyll a-c binding protein C, chloroplastic (216 aa).

Residues 1-38 (MKSAIMAVASAAPGLRGPSAFNGAALTTSAKSSSAMKM) constitute a chloroplast transit peptide. 3 consecutive transmembrane segments (helical) span residues 80-100 (IAMLAIAGHLTQQNARLPGML), 121-141 (IPPGGLAQIFGFIGFLELAVM), and 182-202 (GRAAQMGILALMVHEELNNKP).

Belongs to the fucoxanthin chlorophyll protein family. As to quaternary structure, the LHC complex of chromophytic algae is composed of fucoxanthin, chlorophyll A and C bound non-covalently by fucoxanthin chlorophyll proteins (FCPs). The ratio of pigments in this LHC is; fucoxanthin: chlorophyll C: chlorophyll A; (0.6-1): (0.1-0.3): (1).

Its subcellular location is the plastid. The protein localises to the chloroplast thylakoid membrane. Its function is as follows. The light-harvesting complex (LHC) functions as a light receptor, it captures and delivers excitation energy to photosystems with which it is closely associated. Energy is transferred from the carotenoid and chlorophyll C (or B) to chlorophyll A and the photosynthetic reaction centers where it is used to synthesize ATP and reducing power. This Macrocystis pyrifera (Giant kelp) protein is Fucoxanthin-chlorophyll a-c binding protein C, chloroplastic (FCPC).